The sequence spans 209 residues: Uracil phosphoribosyltransferase (209 aa).

Residues arginine 79, arginine 104, and 131–139 (DPMLATGGS) each bind 5-phospho-alpha-D-ribose 1-diphosphate. Uracil contacts are provided by residues isoleucine 194 and 199–201 (GDA). Residue aspartate 200 participates in 5-phospho-alpha-D-ribose 1-diphosphate binding.

The protein belongs to the UPRTase family. It depends on Mg(2+) as a cofactor.

It carries out the reaction UMP + diphosphate = 5-phospho-alpha-D-ribose 1-diphosphate + uracil. Its pathway is pyrimidine metabolism; UMP biosynthesis via salvage pathway; UMP from uracil: step 1/1. Allosterically activated by GTP. Catalyzes the conversion of uracil and 5-phospho-alpha-D-ribose 1-diphosphate (PRPP) to UMP and diphosphate. This chain is Uracil phosphoribosyltransferase, found in Geobacillus kaustophilus (strain HTA426).